Reading from the N-terminus, the 218-residue chain is 1-Cys peroxiredoxin PER1 (218 aa).

Residues 4–164 (LTIGDTVPNL…VVRAVDSLLT (161 aa)) enclose the Thioredoxin domain. C46 acts as the Cysteine sulfenic acid (-SOH) intermediate in catalysis. A Bipartite nuclear localization signal motif is present at residues 194 to 217 (KKMFPQGFETADLPSKKGYLRFTK).

The protein belongs to the peroxiredoxin family. Prx6 subfamily.

The protein localises to the nucleus. Its subcellular location is the cytoplasm. It catalyses the reaction a hydroperoxide + [thioredoxin]-dithiol = an alcohol + [thioredoxin]-disulfide + H2O. Functionally, thiol-specific peroxidase that catalyzes the reduction of hydrogen peroxide and organic hydroperoxides to water and alcohols, respectively. Seems to contribute to the inhibition of germination during stress. In Triticum aestivum (Wheat), this protein is 1-Cys peroxiredoxin PER1 (PER1).